A 630-amino-acid polypeptide reads, in one-letter code: PAN2-PAN3 deadenylation complex subunit PAN3 (630 aa).

Residues 7-36 (SAKDTLCKNILIYGYCKFENKGCAFSHHKP) form a C3H1-type zinc finger. 2 disordered regions span residues 38–72 (VGQP…PSFQ) and 135–171 (GFGS…QSSG). A compositionally biased stretch (low complexity) spans 44–56 (SASSSSGYSGNSS). Over residues 140 to 149 (YPSSPNTSGA) the composition is skewed to polar residues. The interval 231 to 501 (QTLPRSNLPE…LDRFSQRYLT (271 aa)) is pseudokinase domain. Residues Arg283, 333–340 (DYFPNSST), and 388–389 (TK) contribute to the ATP site. Positions 502-540 (TRLFSTINNLEDSTDFMESQITTELENARLFRLLTKLNF) form a coiled coil. A knob domain region spans residues 541-630 (IIDRPEAKDW…DSVFRNLTRD (90 aa)).

Belongs to the protein kinase superfamily. PAN3 family. In terms of assembly, homodimer. Forms a heterotrimer with a catalytic subunit PAN2 to form the poly(A)-nuclease (PAN) deadenylation complex. Interacts (via PAM-2 motif) with poly(A)-binding protein PAB1 (via PABC domain), conferring substrate specificity of the enzyme complex.

It is found in the cytoplasm. Functionally, regulatory subunit of the poly(A)-nuclease (PAN) deadenylation complex, one of two cytoplasmic mRNA deadenylases involved in mRNA turnover. PAN specifically shortens poly(A) tails of RNA and the activity is stimulated by poly(A)-binding protein PAB1. PAN deadenylation is followed by rapid degradation of the shortened mRNA tails by the CCR4-NOT complex. Deadenylated mRNAs are then degraded by two alternative mechanisms, namely exosome-mediated 3'-5' exonucleolytic degradation, or deadenylation-dependent mRNA decaping and subsequent 5'-3' exonucleolytic degradation by XRN1. May also be involved in post-transcriptional maturation of mRNA poly(A) tails. PAN3 acts as a positive regulator for PAN activity, recruiting the catalytic subunit PAN2 to mRNA via its interaction with RNA and with PAB1. The chain is PAN2-PAN3 deadenylation complex subunit PAN3 from Scheffersomyces stipitis (strain ATCC 58785 / CBS 6054 / NBRC 10063 / NRRL Y-11545) (Yeast).